We begin with the raw amino-acid sequence, 589 residues long: Intermediate filament protein B (589 aa).

The head stretch occupies residues 1 to 84; that stretch reads SLKQSQESSE…LEATDKEKKE (84 aa). Residues 81-433 enclose the IF rod domain; the sequence is EKKEMQGLND…KMLEGEESRV (353 aa). Residues 85–116 form a coil 1A region; sequence MQGLNDRLGNYIDRVKKLEEQNRKLVADLDEL. A linker 1 region spans residues 117-130; that stretch reads RGRWGKDTSEIKIQ. The tract at residues 131-268 is coil 1B; sequence YSDSLRDARK…RVHEQEVKEL (138 aa). A linker 12 region spans residues 269 to 285; the sequence is QALLAQAPADTREFFKN. Residues 286–433 are coil 2; the sequence is ELALAIRDIK…KMLEGEESRV (148 aa). The tail stretch occupies residues 434-589; the sequence is GLRQMVEQVV…HTQKTIQTGQ (156 aa). The interval 446 to 470 is disordered; the sequence is HSLQQQEDTDSTRNVRGEVSTKTTF. Residues 466–584 enclose the LTD domain; the sequence is TKTTFQRSAK…DERATHTQKT (119 aa).

The protein belongs to the intermediate filament family. As to quaternary structure, a and B can form homopolymers. In terms of tissue distribution, giant body muscle cells.

It localises to the cytoplasm. The chain is Intermediate filament protein B from Ascaris suum (Pig roundworm).